Here is a 229-residue protein sequence, read N- to C-terminus: 7-cyano-7-deazaguanine synthase (229 aa).

An ATP-binding site is contributed by 9-19 (LSGGLDSTTVL). Zn(2+) is bound by residues C192, C202, C205, and C208.

The protein belongs to the QueC family. It depends on Zn(2+) as a cofactor.

The enzyme catalyses 7-carboxy-7-deazaguanine + NH4(+) + ATP = 7-cyano-7-deazaguanine + ADP + phosphate + H2O + H(+). The protein operates within purine metabolism; 7-cyano-7-deazaguanine biosynthesis. In terms of biological role, catalyzes the ATP-dependent conversion of 7-carboxy-7-deazaguanine (CDG) to 7-cyano-7-deazaguanine (preQ(0)). This is 7-cyano-7-deazaguanine synthase from Kineococcus radiotolerans (strain ATCC BAA-149 / DSM 14245 / SRS30216).